We begin with the raw amino-acid sequence, 148 residues long: Endothelial differentiation-related factor 1 homolog (148 aa).

The tract at residues 1–26 (MAESDWDTVTVLRKKGPSAAQAKSKQ) is disordered. Residues 81 to 135 (IQQGRQSKGMTQKDLATKINEKPQVIADYESGRAIPNNQVMGKIERAIGLKLRGK) form the HTH cro/C1-type domain. The segment at residues 92-111 (QKDLATKINEKPQVIADYES) is a DNA-binding region (H-T-H motif).

The protein localises to the nucleus. In terms of biological role, probable transcriptional coactivator. This is Endothelial differentiation-related factor 1 homolog (EDF1) from Gallus gallus (Chicken).